The sequence spans 378 residues: Mannitol-1-phosphate 5-dehydrogenase (378 aa).

Residue Ser4 to Gly15 coordinates NAD(+).

This sequence belongs to the mannitol dehydrogenase family.

The enzyme catalyses D-mannitol 1-phosphate + NAD(+) = beta-D-fructose 6-phosphate + NADH + H(+). This Streptococcus pneumoniae (strain CGSP14) protein is Mannitol-1-phosphate 5-dehydrogenase.